The primary structure comprises 355 residues: Guanine nucleotide-binding protein alpha-12 subunit (355 aa).

The G-alpha domain occupies 28–355 (RQINLLLLGS…EQNLKTLMMQ (328 aa)). Positions 31–44 (NLLLLGSGESGKST) are G1 motif. GTP contacts are provided by residues 36–43 (GSGESGKS), 176–182 (LFCRKAT), 201–205 (DVGGQ), 270–273 (NKND), and A327. Residues S43 and T182 each coordinate Mg(2+). Residues 174 to 182 (DILFCRKAT) are G2 motif. Residues 197 to 206 (FRFIDVGGQR) form a G3 motif region. The G4 motif stretch occupies residues 266–273 (ILFMNKND). Residues 325-330 (TTAVDT) form a G5 motif region.

The protein belongs to the G-alpha family. As to quaternary structure, g proteins are composed of 3 units; alpha, beta and gamma. The alpha chain contains the guanine nucleotide binding site.

In terms of biological role, guanine nucleotide-binding proteins (G proteins) are involved as modulators or transducers in various transmembrane signaling systems. May play a role in resistance to fungal infection in the epidermis by regulating the up-regulation of several antimicrobial peptides of the NLP and CNC families. Upstream of plc-3, tpa-1 and the p38-like pathway, required for the expression of antimicrobial peptide nlp-29 in the epidermis in response to fungal infection or physical injury. This chain is Guanine nucleotide-binding protein alpha-12 subunit (gpa-12), found in Caenorhabditis elegans.